The primary structure comprises 126 residues: Small ribosomal subunit protein uS8 (126 aa).

This sequence belongs to the universal ribosomal protein uS8 family. Part of the 30S ribosomal subunit. Contacts proteins S5 and S12.

One of the primary rRNA binding proteins, it binds directly to 16S rRNA central domain where it helps coordinate assembly of the platform of the 30S subunit. This is Small ribosomal subunit protein uS8 from Nitratidesulfovibrio vulgaris (strain DSM 19637 / Miyazaki F) (Desulfovibrio vulgaris).